We begin with the raw amino-acid sequence, 554 residues long: MMLSRAKPAVGRGVQHTDKRKKKGRKIPKLEELLSKRDFTGAITLLEFKRHVGEEEEDTNLWIGYCAFHLGDYKRALEEYENATKEENCNSEVWVNLACTYFFLGMYKQAEAAGFKASKSRLQNRLLFHLAHKFNDEKKLMSFHQNLQDVTEDQLSLASIHYMRSHYQEAIDIYKRILLDNREYLALNVYVALCYYKLDYYDVSQEVLAVYLQQIPDSTIALNLKACNHFRLYNGRAAEAELKSLMDNASSSFEFAKELIRHNLVVFRGGEGALQVLPPLVDVIPEARLNLVIYYLRQDDVQEAYNLIKDLEPTTPQEYILKGVVNAALGQEMGSRDHMKIAQQFFQLVGGSASECDTIPGRQCMASCFFLLKQFDDVLIYLNSFKSYFYNDDIFNFNYAQAKAATGNTSEGEEAFLLIQSEKMKNDYIYLSWLARCYIMNKKPRLAWELYLKMETSGESFSLLQLIANDCYKMGQFYYSAKAFDVLERLDPNPEYWEGKRGACVGIFQMIIAGREPKETLREVLHLLRSTGNTQVEYMIRIMKKWAKENRVSI.

The interval 1–24 is disordered; the sequence is MMLSRAKPAVGRGVQHTDKRKKKG. TPR repeat units lie at residues 57–90, 92–125, 151–184, and 468–501; these read EDTN…ENCN, EVWV…LQNR, TEDQ…NREY, and ANDC…EGKR.

The protein belongs to the IFT56 family. In terms of assembly, component of the IFT complex B. Interacts with IFT46; the interaction is direct.

It localises to the cell projection. The protein resides in the cilium. Functionally, component of the intraflagellar transport (IFT) complex B required for transport of proteins in the motile cilium. Required for transport of specific ciliary cargo proteins related to motility, while it is neither required for IFT complex B assembly or motion nor for cilium assembly. Required for efficient coupling between the accumulation of GLI2 and GLI3 at the ciliary tips and their dissociation from the negative regulator SUFU. Plays a key role in maintaining the integrity of the IFT complex B and the proper ciliary localization of the IFT complex B components. Not required for IFT complex A ciliary localization or function. Essential for maintaining proper microtubule organization within the ciliary axoneme. The protein is Intraflagellar transport protein 56 of Homo sapiens (Human).